Here is a 749-residue protein sequence, read N- to C-terminus: Disintegrin and metalloproteinase domain-containing protein 10 (749 aa).

The first 19 residues, 1–19 (MVLPTVLILLLSWAAGLGG), serve as a signal peptide directing secretion. A propeptide spanning residues 20–214 (QYGNPLNKYI…SGPELLRKKR (195 aa)) is cleaved from the precursor. Residues 20-673 (QYGNPLNKYI…SPQLYENIAE (654 aa)) lie on the Extracellular side of the membrane. The Cysteine switch signature appears at 171-178 (GGCADHSV). Residue Cys173 participates in Zn(2+) binding. Residues 221-457 (NTCQLYIQTD…KRNNCFVESG (237 aa)) enclose the Peptidase M12B domain. Disulfide bonds link Cys223-Cys314, Cys345-Cys452, Cys400-Cys436, Cys461-Cys496, Cys472-Cys485, Cys474-Cys480, Cys484-Cys516, Cys504-Cys512, Cys511-Cys537, Cys525-Cys544, Cys531-Cys563, Cys556-Cys568, Cys573-Cys599, Cys581-Cys608, Cys583-Cys598, Cys595-Cys640, and Cys633-Cys646. Residues Asn268 and Asn279 are each glycosylated (N-linked (GlcNAc...) asparagine). His384 lines the Zn(2+) pocket. Residue Glu385 is part of the active site. 2 residues coordinate Zn(2+): His388 and His394. Asn440 carries N-linked (GlcNAc...) asparagine glycosylation. Residues 458–552 (QPICGNGMVE…LCPASDPKPN (95 aa)) form the Disintegrin domain. N-linked (GlcNAc...) asparagine glycosylation is present at Asn552. The helical transmembrane segment at 674-694 (WIVAHWWAVLLMGIALIMLMA) threads the bilayer. At 695–749 (GFIKICSVHTPSSNPKLPPPKPLPGTLKRRRPPQPIQQPPRQRPRESYQMGHMRR) the chain is on the cytoplasmic side. The interval 705-749 (PSSNPKLPPPKPLPGTLKRRRPPQPIQQPPRQRPRESYQMGHMRR) is disordered. Residues 709-716 (PKLPPPKP) carry the SH3-binding motif. At Thr720 the chain carries Phosphothreonine. An SH3-binding motif is present at residues 723–729 (RRRPPQP). The tract at residues 735-749 (RQRPRESYQMGHMRR) is interaction with AP2A1, AP2A2 and AP2M1.

Forms a ternary EFNA5-EPHA3-ADAM10 complex mediating EFNA5 extracellular domain shedding by ADAM10 which regulates the EFNA5-EPHA3 complex internalization and function, the cleavage occurs in trans, with ADAM10 and its substrate being on the membranes of opposing cells. Interacts with the clathrin adapter AP2 complex subunits AP2A1, AP2A2, AP2B1, and AP2M1; this interaction facilitates ADAM10 endocytosis from the plasma membrane during long-term potentiation in hippocampal neurons. Forms a ternary complex composed of ADAM10, EPHA4 and CADH1; within the complex, ADAM10 cleaves CADH1 which disrupts adherens junctions. Interacts with EPHA2. Interacts with NGF in a divalent cation-dependent manner. Interacts with TSPAN14; the interaction promotes ADAM10 maturation and cell surface expression. Interacts with TSPAN5, TSPAN10, TSPAN14, TSPAN15, TSPAN17 and TSPAN33; these interactions regulate ADAM10 substrate specificity, endocytosis and turnover. Interacts (via extracellular domain) with TSPAN33 (via extracellular domain) and (via cytoplasmic domain) with AFDN; interaction with TSPAN33 allows the docking of ADAM10 to zonula adherens through a PDZ11-dependent interaction between TSPAN33 and PLEKHA7 while interaction with AFDN locks ADAM10 at zonula adherens. Interacts with DLG1; this interaction recruits ADAM10 to the cell membrane during long-term depression in hippocampal neurons. Interacts (via extracellular domain) with BACE1 (via extracellular domain). Interacts with FAM171A1. Zn(2+) serves as cofactor. Post-translationally, the precursor is cleaved by furin and PCSK7. In terms of tissue distribution, expressed in the brain, specifically in neurons and astrocytes (at protein level). Expressed in inner and outer pillar cells of the organ of Corti (at protein level). Expressed in kidney and lung.

It is found in the cell membrane. The protein localises to the golgi apparatus membrane. It localises to the cytoplasmic vesicle. The protein resides in the clathrin-coated vesicle. Its subcellular location is the cell projection. It is found in the axon. The protein localises to the dendrite. It localises to the cell junction. The protein resides in the adherens junction. Its subcellular location is the cytoplasm. The catalysed reaction is Endopeptidase of broad specificity.. With respect to regulation, catalytically inactive when the propeptide is intact and associated with the mature enzyme. The disintegrin and cysteine-rich regions modulate access of substrates to exerts an inhibitory effect on the cleavage of ADAM10 substrates. Functionally, transmembrane metalloprotease which mediates the ectodomain shedding of a myriad of transmembrane proteins, including adhesion proteins, growth factor precursors and cytokines being essential for development and tissue homeostasis. Associates with six members of the tetraspanin superfamily TspanC8 which regulate its exit from the endoplasmic reticulum and its substrate selectivity. Cleaves the membrane-bound precursor of TNF-alpha to its mature soluble form. Responsible for the proteolytical release of soluble JAM3 from endothelial cells surface. Responsible for the proteolytic release of several other cell-surface proteins, including heparin-binding epidermal growth-like factor, ephrin-A2, CD44, CDH2 and for constitutive and regulated alpha-secretase cleavage of amyloid precursor protein (APP) at '687-Lys-|-Leu-688'. Contributes to the normal cleavage of the cellular prion protein. Involved in the cleavage of the adhesion molecule L1 at the cell surface and in released membrane vesicles, suggesting a vesicle-based protease activity. Also controls the proteolytic processing of Notch and mediates lateral inhibition during neurogenesis. Required for the development of type 1 transitional B cells into marginal zone B cells, probably by cleaving Notch. Responsible for the FasL ectodomain shedding and for the generation of the remnant ADAM10-processed FasL (FasL APL) transmembrane form. Also cleaves the ectodomain of the integral membrane proteins CORIN and ITM2B. Mediates the proteolytic cleavage of LAG3, leading to release the secreted form of LAG3. Mediates the proteolytic cleavage of IL6R and IL11RA, leading to the release of secreted forms of IL6R and IL11RA. Enhances the cleavage of CHL1 by BACE1. Cleaves NRCAM. Cleaves TREM2, resulting in shedding of the TREM2 ectodomain. Involved in the development and maturation of glomerular and coronary vasculature. During development of the cochlear organ of Corti, promotes pillar cell separation by forming a ternary complex with CADH1 and EPHA4 and cleaving CADH1 at adherens junctions. May regulate the EFNA5-EPHA3 signaling. This is Disintegrin and metalloproteinase domain-containing protein 10 (Adam10) from Mus musculus (Mouse).